A 252-amino-acid polypeptide reads, in one-letter code: Tabtoxin biosynthesis enzyme (252 aa).

The interval 1 to 23 (MYQRTATQLARKPASKQGETEMN) is disordered.

In terms of biological role, may play a role in tabtoxin biosynthesis. The protein is Tabtoxin biosynthesis enzyme (tblA) of Pseudomonas amygdali pv. tabaci (Pseudomonas syringae pv. tabaci).